Here is a 361-residue protein sequence, read N- to C-terminus: Chorismate synthase (361 aa).

A compositionally biased stretch (basic and acidic residues) spans 40 to 49 (DLQHDLDRRR). The tract at residues 40–60 (DLQHDLDRRRPGTSRHTTQRR) is disordered. 2 residues coordinate NADP(+): Arg-48 and Arg-54. FMN-binding positions include 125-127 (RSS), 237-238 (NA), Gly-277, 292-296 (KPTSS), and Arg-318.

The protein belongs to the chorismate synthase family. As to quaternary structure, homotetramer. Requires FMNH2 as cofactor.

It carries out the reaction 5-O-(1-carboxyvinyl)-3-phosphoshikimate = chorismate + phosphate. It functions in the pathway metabolic intermediate biosynthesis; chorismate biosynthesis; chorismate from D-erythrose 4-phosphate and phosphoenolpyruvate: step 7/7. Its function is as follows. Catalyzes the anti-1,4-elimination of the C-3 phosphate and the C-6 proR hydrogen from 5-enolpyruvylshikimate-3-phosphate (EPSP) to yield chorismate, which is the branch point compound that serves as the starting substrate for the three terminal pathways of aromatic amino acid biosynthesis. This reaction introduces a second double bond into the aromatic ring system. The chain is Chorismate synthase from Chromohalobacter salexigens (strain ATCC BAA-138 / DSM 3043 / CIP 106854 / NCIMB 13768 / 1H11).